The sequence spans 156 residues: Ribosome maturation factor RimP (156 aa).

This sequence belongs to the RimP family.

The protein localises to the cytoplasm. In terms of biological role, required for maturation of 30S ribosomal subunits. The polypeptide is Ribosome maturation factor RimP (Bacillus thuringiensis (strain Al Hakam)).